The chain runs to 324 residues: Ribosomal RNA small subunit methyltransferase H (324 aa).

Residues 47–49 (GGH), Asp-67, Leu-96, Asp-115, and Gln-122 each bind S-adenosyl-L-methionine.

The protein belongs to the methyltransferase superfamily. RsmH family.

It localises to the cytoplasm. The enzyme catalyses cytidine(1402) in 16S rRNA + S-adenosyl-L-methionine = N(4)-methylcytidine(1402) in 16S rRNA + S-adenosyl-L-homocysteine + H(+). Its function is as follows. Specifically methylates the N4 position of cytidine in position 1402 (C1402) of 16S rRNA. This chain is Ribosomal RNA small subunit methyltransferase H, found in Halorhodospira halophila (strain DSM 244 / SL1) (Ectothiorhodospira halophila (strain DSM 244 / SL1)).